Here is a 93-residue protein sequence, read N- to C-terminus: Small integral membrane protein 36 (93 aa).

A helical transmembrane segment spans residues 14 to 34 (LIILVASYVILLLVFLISCVL). A disordered region spans residues 73–93 (PKGPGLSLGDPAPLGKKSTMV).

The protein localises to the membrane. This chain is Small integral membrane protein 36, found in Homo sapiens (Human).